The sequence spans 474 residues: Immunoglobulin heavy constant mu (474 aa).

A CH1 region spans residues 1-105; the sequence is GSASAPTLFP…NKEKNVPLPV (105 aa). The Extracellular portion of the chain corresponds to 1–450; it reads GSASAPTLFP…EEGFENLWAT (450 aa). 4 Ig-like domains span residues 6–102, 111–211, 229–319, and 329–430; these read PTLF…KNVP, PKVS…QNAS, PSFA…QTIS, and PDVY…RTVD. 2 cysteine pairs are disulfide-bonded: Cys-28-Cys-88 and Cys-134-Cys-197. Asn-46 carries an N-linked (GlcNAc...) (complex) asparagine glycan. The tract at residues 106-217 is CH2; sequence IAELPPKVSV…QNASSMCVPD (112 aa). An N-linked (GlcNAc...) (complex) asparagine glycan is attached at Asn-209. The tract at residues 218 to 323 is CH3; it reads QDTAIRVFAI…LKQTISRPKG (106 aa). 2 disulfides stabilise this stretch: Cys-244–Cys-303 and Cys-351–Cys-413. N-linked (GlcNAc...) asparagine glycosylation is found at Asn-272 and Asn-279. The tract at residues 324 to 452 is CH4; that stretch reads VALHRPDVYL…GFENLWATAS (129 aa). The tract at residues 437-453 is important for IgM oligomerization; sequence VSADEEGFENLWATAST. An N-linked (GlcNAc...) asparagine glycan is attached at Asp-440. The helical transmembrane segment at 451–471 threads the bilayer; sequence ASTFIVLFLLSLFYSTTVTLF. Residues 472-474 lie on the Cytoplasmic side of the membrane; that stretch reads KVK.

The basic structural unit of both sIgM and mIgM molecules consists of two identical heavy chains and two identical light chains; disulfide-linked. N-terminal variable regions of the heavy and light chains form the antigen binding sites, whereas the C-terminal constant regions of the heavy chains interact with immune receptors to mediate effector functions. As to quaternary structure, part of IgM antibody. Forms high order oligomers, homopentamers stabilized by the JCHAIN and homohexamers that lack JCHAIN. The oligomerization amplifies an inherently low affinity of IgM antibodies for the antigen by multi-point attachment (avidity). Adjacent IgM protomers associate via interchain disulfide links to form an asymmetric pentameric structure with a 50 degree gap. A single copy of JCHAIN is covalently linked to the first and the fifth IgM monomers via interchain disulfide bonds thus closing the pentamer ring. Only JCHAIN-containing IgM binds PIGR secretory component (via D1-CDR1 region); this interaction is a prerequisite for IgM transcytosis across mucosal epithelium. Pentameric sIgM interacts (via CH4 domain) with FCRM (via Ig-like domain); the interaction is glycan-independent and multivalent theoretically involving up to eight binding sites for the IgM pentamer. Interacts with FCAMR; this interaction facilitates the endocytosis of IgM-coated microbes or IgM-antigen immune complexes. Antigen-bound IgM (via the Fc region) binds to globular domains of C1q component of the complement system, all three modules C1QA, C1QB and C1QC being involved in IgM binding; this interaction is multivalent. Pentameric sIgM (via Fc region) interacts with CD5L (via SRCR2) through interchain disulfide-linkages; this interaction protects CD5L from renal excretion and provides for high levels of CD5L in circulation. In terms of assembly, part of IgM B cell receptor complex on pre-B cells, immature and mature B cells. The BCR complex consists of one membrane-bound IgM molecule responsible for antigen binding, non-covalently associated with CD79A and CD79B signaling chains. In terms of processing, N-glycosylated; important for IgM secretion and its localization at the plasma membrane. The interaction with FCMR is glycan-independent.

The protein localises to the secreted. Its subcellular location is the cell membrane. In terms of biological role, constant region of immunoglobulin heavy chains. Immunoglobulins, also known as antibodies, are membrane-bound or secreted glycoproteins produced by B lymphocytes. In the recognition phase of humoral immunity, the membrane-bound immunoglobulins serve as receptors which, upon binding of a specific antigen, trigger the clonal expansion and differentiation of B lymphocytes into immunoglobulins-secreting plasma cells. Secreted immunoglobulins mediate the effector phase of humoral immunity, which results in the elimination of bound antigens. The antigen binding site is formed by the variable domain of one heavy chain, together with that of its associated light chain. Thus, each immunoglobulin has two antigen binding sites with remarkable affinity for a particular antigen. The variable domains are assembled by a process called V-(D)-J rearrangement and can then be subjected to somatic hypermutations which, after exposure to antigen and selection, allow affinity maturation for a particular antigen. Constant region of secreted IgM (sIgM), also known as the Fc region of IgM antibody. Able to multimerize, forms high order polymers, mainly pentamers and occasionally hexamers, providing for multivalency and high avidity recognition of antigens. Natural sIgM are polyreactive and recognize conserved self- and pathogen-derived structures, whereas immune sIgM are secreted only upon exposure to pathogens and are antigen-specific. Both natural and immune sIgM are required for an efficient humoral immune response to infection. Mediates sIgM effector functions mostly via Fc receptors and the complement system. On lymphoid cells binds high-affinity Fc receptor FCMR and promotes induction of an efficient neutralizing IgG response while maintaining tolerance to self-antigens. Recruits C1q complement component to initiate the classical complement pathway, facilitating the recognition and neutralization of pathogens by the host. Together with C1q and mannose-binding lectin promotes the phagocytosis of apoptotic cells by macrophages, ensuring the clearance of potential autoimmune epitopes from tissues. Involved in mucosal immunity. It is transported by transcytosis across mucosal epithelium by PIGR and secreted on the apical side in complex with PIGR secretory component to scan mucosal lining for pathogens. IgM-antigen complexes undergo FCMR-mediated retrotranscytosis across mucosal M cells toward antigen-presenting cells in mucosal lymphoid tissues. Its function is as follows. Constant region of membrane-bound IgM, part of the B cell receptor complex (BCR). IgM BCR provides constitutive tonic signaling for B cell survival. Mediates pre-BCR signaling that regulates B cell selection and rearrangement of Ig genes via allelic exclusion. This is Immunoglobulin heavy constant mu from Homo sapiens (Human).